Consider the following 160-residue polypeptide: Serine-protein kinase RsbW (160 aa).

The protein belongs to the anti-sigma-factor family.

It carries out the reaction L-seryl-[protein] + ATP = O-phospho-L-seryl-[protein] + ADP + H(+). The enzyme catalyses L-threonyl-[protein] + ATP = O-phospho-L-threonyl-[protein] + ADP + H(+). Functionally, negative regulator of sigma-B activity. Phosphorylates and inactivates its specific antagonist protein, RsbV. Upon phosphorylation of RsbV, RsbW is released and binds to sigma-B, thereby blocking its ability to form an RNA polymerase holoenzyme (E-sigma-B). The polypeptide is Serine-protein kinase RsbW (Bacillus cereus (strain Q1)).